A 146-amino-acid polypeptide reads, in one-letter code: D-aminoacyl-tRNA deacylase (146 aa).

The Gly-cisPro motif, important for rejection of L-amino acids signature appears at 137-138 (GP).

It belongs to the DTD family. Homodimer.

The protein localises to the cytoplasm. It catalyses the reaction glycyl-tRNA(Ala) + H2O = tRNA(Ala) + glycine + H(+). The catalysed reaction is a D-aminoacyl-tRNA + H2O = a tRNA + a D-alpha-amino acid + H(+). An aminoacyl-tRNA editing enzyme that deacylates mischarged D-aminoacyl-tRNAs. Also deacylates mischarged glycyl-tRNA(Ala), protecting cells against glycine mischarging by AlaRS. Acts via tRNA-based rather than protein-based catalysis; rejects L-amino acids rather than detecting D-amino acids in the active site. By recycling D-aminoacyl-tRNA to D-amino acids and free tRNA molecules, this enzyme counteracts the toxicity associated with the formation of D-aminoacyl-tRNA entities in vivo and helps enforce protein L-homochirality. In Bacillus cereus (strain G9842), this protein is D-aminoacyl-tRNA deacylase.